A 244-amino-acid chain; its full sequence is Transcriptional regulatory protein AruR (244 aa).

A Response regulatory domain is found at 6 to 124 (RVLVVDDDPV…ELVSRAKNLI (119 aa)). Position 60 is a 4-aspartylphosphate (Asp60). Residues 139 to 239 (QALRQFGDWL…IHGAGYLFTA (101 aa)) constitute a DNA-binding region (ompR/PhoB-type).

Phosphorylated by AruS.

The protein resides in the cytoplasm. It functions in the pathway amino-acid degradation; L-arginine degradation [regulation]. Functionally, member of the two-component regulatory system AruS/AruR, which is involved in the regulation of the arginine transaminase (ATA) pathway in response to exogeneous L-arginine. Regulates transcription of aruH and aruI. This Pseudomonas aeruginosa (strain ATCC 15692 / DSM 22644 / CIP 104116 / JCM 14847 / LMG 12228 / 1C / PRS 101 / PAO1) protein is Transcriptional regulatory protein AruR (aruR).